Here is a 366-residue protein sequence, read N- to C-terminus: 2-aminoethylphosphonate--pyruvate transaminase (366 aa).

An N6-(pyridoxal phosphate)lysine modification is found at K192.

The protein belongs to the class-V pyridoxal-phosphate-dependent aminotransferase family. PhnW subfamily. Homodimer. Pyridoxal 5'-phosphate is required as a cofactor.

It carries out the reaction (2-aminoethyl)phosphonate + pyruvate = phosphonoacetaldehyde + L-alanine. Functionally, involved in phosphonate degradation. The polypeptide is 2-aminoethylphosphonate--pyruvate transaminase (phnW) (Lysinibacillus sphaericus (strain C3-41)).